A 493-amino-acid polypeptide reads, in one-letter code: MANYFNTLNLRQQLAQLGKCRFMQREEFADGCNVLKGKKVVIVGCGAQGLNQGLNMRDSGLDISYALRKAAITEKRASWQKATDNGFAVGTYEELIPTADLVLNLTPDKQHSDVVKTVMPLMKQGAALGYSHGFNVVEEGQQIRADITVVMVAPKCPGTEVREEYKRGFGVPTLIAVHPENDPKGEGMAIAKAWASATGGDRAGVLESSFVAEVKSDLMGEQTILCGMLQAGSLLCYDKLVAEGTDPAYAGKLIQFGWETITEALKQGGISLMMDRLSNPAKLRAFELSEQLKTLMRPLFEKHMDDIIAGEFSRGMMADWAEDDAKLFGWREETGKSAFENAPAFAGKIAEQEYFDNGVVMVAMVKAGVELAFETMVASGIYEESAYYESLHELPLIANTVARKRLYEMNVVISDTAEYGNYLFANAAVPLLREHFMPTLKAGDLGASKAEGQSVDNLALLAANEATRNHPIEKIGQVLRGYMKDMKRIAVGG.

The region spanning 15–208 (AQLGKCRFMQ…GGDRAGVLES (194 aa)) is the KARI N-terminal Rossmann domain. NADP(+) contacts are provided by residues 45–48 (CGAQ), Arg-68, Arg-76, Ser-78, and 108–110 (DKQ). Residue His-132 is part of the active site. Gly-158 lines the NADP(+) pocket. 2 consecutive KARI C-terminal knotted domains span residues 209 to 344 (SFVA…NAPA) and 345 to 486 (FAGK…MKDM). Asp-217, Glu-221, Glu-389, and Glu-393 together coordinate Mg(2+). Ser-414 serves as a coordination point for substrate.

It belongs to the ketol-acid reductoisomerase family. Mg(2+) serves as cofactor.

It catalyses the reaction (2R)-2,3-dihydroxy-3-methylbutanoate + NADP(+) = (2S)-2-acetolactate + NADPH + H(+). The enzyme catalyses (2R,3R)-2,3-dihydroxy-3-methylpentanoate + NADP(+) = (S)-2-ethyl-2-hydroxy-3-oxobutanoate + NADPH + H(+). It functions in the pathway amino-acid biosynthesis; L-isoleucine biosynthesis; L-isoleucine from 2-oxobutanoate: step 2/4. It participates in amino-acid biosynthesis; L-valine biosynthesis; L-valine from pyruvate: step 2/4. Its function is as follows. Involved in the biosynthesis of branched-chain amino acids (BCAA). Catalyzes an alkyl-migration followed by a ketol-acid reduction of (S)-2-acetolactate (S2AL) to yield (R)-2,3-dihydroxy-isovalerate. In the isomerase reaction, S2AL is rearranged via a Mg-dependent methyl migration to produce 3-hydroxy-3-methyl-2-ketobutyrate (HMKB). In the reductase reaction, this 2-ketoacid undergoes a metal-dependent reduction by NADPH to yield (R)-2,3-dihydroxy-isovalerate. This is Ketol-acid reductoisomerase (NADP(+)) from Aeromonas hydrophila subsp. hydrophila (strain ATCC 7966 / DSM 30187 / BCRC 13018 / CCUG 14551 / JCM 1027 / KCTC 2358 / NCIMB 9240 / NCTC 8049).